The sequence spans 185 residues: ATP synthase subunit b 1 (185 aa).

The helical transmembrane segment at 4–24 threads the bilayer; it reads TLAIALTLATTSPAFAAGGGW.

The protein belongs to the ATPase B chain family. As to quaternary structure, F-type ATPases have 2 components, F(1) - the catalytic core - and F(0) - the membrane proton channel. F(1) has five subunits: alpha(3), beta(3), gamma(1), delta(1), epsilon(1). F(0) has three main subunits: a(1), b(2) and c(10-14). The alpha and beta chains form an alternating ring which encloses part of the gamma chain. F(1) is attached to F(0) by a central stalk formed by the gamma and epsilon chains, while a peripheral stalk is formed by the delta and b chains.

The protein resides in the cell inner membrane. Its function is as follows. F(1)F(0) ATP synthase produces ATP from ADP in the presence of a proton or sodium gradient. F-type ATPases consist of two structural domains, F(1) containing the extramembraneous catalytic core and F(0) containing the membrane proton channel, linked together by a central stalk and a peripheral stalk. During catalysis, ATP synthesis in the catalytic domain of F(1) is coupled via a rotary mechanism of the central stalk subunits to proton translocation. Component of the F(0) channel, it forms part of the peripheral stalk, linking F(1) to F(0). This Ruegeria sp. (strain TM1040) (Silicibacter sp.) protein is ATP synthase subunit b 1.